Consider the following 137-residue polypeptide: LVAVCVSLLGAANIPPQPLNLKQFKNMIQCAGTRTWTSYIGYGCYCGYGGSGTPVDELDRCCYTHDHCYNKAANIPGCNPLIKTYSYTCTKPNITCNDTSDSCARFICDCDRTAAICFASAPYNINNIMISASTSCQ.

The signal sequence occupies residues 1–11; the sequence is LVAVCVSLLGA. The propeptide occupies 12–19; it reads ANIPPQPL. Intrachain disulfides connect cysteine 30-cysteine 89, cysteine 44-cysteine 136, cysteine 46-cysteine 62, cysteine 61-cysteine 117, cysteine 68-cysteine 110, cysteine 78-cysteine 103, and cysteine 96-cysteine 108. Tyrosine 45 and glycine 47 together coordinate Ca(2+). Tyrosine 48 serves as a coordination point for alpha-D-mannopyranose. A Ca(2+)-binding site is contributed by glycine 49. Residue histidine 65 is part of the active site. Ca(2+) is bound at residue aspartate 66. Aspartate 66 provides a ligand contact to alpha-D-mannopyranose. Aspartate 111 is an active-site residue.

The protein belongs to the phospholipase A2 family. Group I subfamily. D49 sub-subfamily. In terms of assembly, homodimer; non-covalently linked. Ca(2+) serves as cofactor. Post-translationally, homodimerization and interaction of the catalytically important Asp-49 (here Asp-111) with mannose molecules may render this protein inactive. In terms of tissue distribution, expressed by the venom gland.

The protein resides in the secreted. The catalysed reaction is a 1,2-diacyl-sn-glycero-3-phosphocholine + H2O = a 1-acyl-sn-glycero-3-phosphocholine + a fatty acid + H(+). Its function is as follows. Snake venom phospholipase A2 (PLA2) that shows anticoagulant and neurotoxic activities. In terms of biological role, PLA2 catalyzes the calcium-dependent hydrolysis of the 2-acyl groups in 3-sn-phosphoglycerides. This is Basic phospholipase A2 2 from Bungarus caeruleus (Indian krait).